Consider the following 372-residue polypeptide: Dual-specificity RNA methyltransferase RlmN (372 aa).

The active-site Proton acceptor is the glutamate 97. One can recognise a Radical SAM core domain in the interval 103–340 (ETDRKTLCVS…AVVRKNRGTD (238 aa)). Cysteine 110 and cysteine 345 are oxidised to a cystine. [4Fe-4S] cluster-binding residues include cysteine 117, cysteine 121, and cysteine 124. S-adenosyl-L-methionine contacts are provided by residues 172–173 (GE), serine 204, 226–228 (SLN), and asparagine 302. Cysteine 345 serves as the catalytic S-methylcysteine intermediate. The tract at residues 350 to 372 (AEGGPGDPRRRAAAALTGTPAAG) is disordered. Residues 362–372 (AAALTGTPAAG) are compositionally biased toward low complexity.

It belongs to the radical SAM superfamily. RlmN family. [4Fe-4S] cluster is required as a cofactor.

Its subcellular location is the cytoplasm. It carries out the reaction adenosine(2503) in 23S rRNA + 2 reduced [2Fe-2S]-[ferredoxin] + 2 S-adenosyl-L-methionine = 2-methyladenosine(2503) in 23S rRNA + 5'-deoxyadenosine + L-methionine + 2 oxidized [2Fe-2S]-[ferredoxin] + S-adenosyl-L-homocysteine. The enzyme catalyses adenosine(37) in tRNA + 2 reduced [2Fe-2S]-[ferredoxin] + 2 S-adenosyl-L-methionine = 2-methyladenosine(37) in tRNA + 5'-deoxyadenosine + L-methionine + 2 oxidized [2Fe-2S]-[ferredoxin] + S-adenosyl-L-homocysteine. Its function is as follows. Specifically methylates position 2 of adenine 2503 in 23S rRNA and position 2 of adenine 37 in tRNAs. m2A2503 modification seems to play a crucial role in the proofreading step occurring at the peptidyl transferase center and thus would serve to optimize ribosomal fidelity. The protein is Dual-specificity RNA methyltransferase RlmN of Anaeromyxobacter dehalogenans (strain 2CP-C).